A 205-amino-acid chain; its full sequence is N-(5'-phosphoribosyl)anthranilate isomerase (205 aa).

It belongs to the TrpF family.

It carries out the reaction N-(5-phospho-beta-D-ribosyl)anthranilate = 1-(2-carboxyphenylamino)-1-deoxy-D-ribulose 5-phosphate. It participates in amino-acid biosynthesis; L-tryptophan biosynthesis; L-tryptophan from chorismate: step 3/5. The polypeptide is N-(5'-phosphoribosyl)anthranilate isomerase (Phocaeicola vulgatus (strain ATCC 8482 / DSM 1447 / JCM 5826 / CCUG 4940 / NBRC 14291 / NCTC 11154) (Bacteroides vulgatus)).